The following is a 552-amino-acid chain: Putative transport protein NT01EI_3867 (552 aa).

The next 5 membrane-spanning stretches (helical) occupy residues 4–24 (IALT…IGNW), 26–46 (IYGV…VGHF), 65–85 (FGLI…FFSS), 90–112 (GLRL…AAIH), and 158–178 (MGYA…IWLI). RCK C-terminal domains are found at residues 191 to 276 (RDFD…VIGE) and 279 to 361 (DTSL…IVGN). Helical transmembrane passes span 371–391 (MLPV…PLFI), 403–425 (AGGP…LYWF), 439–459 (IVLF…DTLL), 464–484 (VTWI…AALL), 493–513 (YLTL…LAFA), and 530–550 (VYPL…LLFW).

The protein belongs to the AAE transporter (TC 2.A.81) family. YidE subfamily.

It localises to the cell membrane. The polypeptide is Putative transport protein NT01EI_3867 (Edwardsiella ictaluri (strain 93-146)).